The chain runs to 368 residues: Dual-specificity RNA methyltransferase RlmN (368 aa).

Catalysis depends on E94, which acts as the Proton acceptor. In terms of domain architecture, Radical SAM core spans 100–334; sequence EEDRATLCVS…VIVRKTRGDD (235 aa). An intrachain disulfide couples C107 to C339. [4Fe-4S] cluster-binding residues include C114, C118, and C121. S-adenosyl-L-methionine contacts are provided by residues 163–164, S195, 217–219, and N296; these read GE and SLH. C339 (S-methylcysteine intermediate) is an active-site residue.

The protein belongs to the radical SAM superfamily. RlmN family. It depends on [4Fe-4S] cluster as a cofactor.

The protein resides in the cytoplasm. The catalysed reaction is adenosine(2503) in 23S rRNA + 2 reduced [2Fe-2S]-[ferredoxin] + 2 S-adenosyl-L-methionine = 2-methyladenosine(2503) in 23S rRNA + 5'-deoxyadenosine + L-methionine + 2 oxidized [2Fe-2S]-[ferredoxin] + S-adenosyl-L-homocysteine. It carries out the reaction adenosine(37) in tRNA + 2 reduced [2Fe-2S]-[ferredoxin] + 2 S-adenosyl-L-methionine = 2-methyladenosine(37) in tRNA + 5'-deoxyadenosine + L-methionine + 2 oxidized [2Fe-2S]-[ferredoxin] + S-adenosyl-L-homocysteine. Functionally, specifically methylates position 2 of adenine 2503 in 23S rRNA and position 2 of adenine 37 in tRNAs. m2A2503 modification seems to play a crucial role in the proofreading step occurring at the peptidyl transferase center and thus would serve to optimize ribosomal fidelity. This Aeromonas salmonicida (strain A449) protein is Dual-specificity RNA methyltransferase RlmN.